A 197-amino-acid polypeptide reads, in one-letter code: NADH-quinone oxidoreductase subunit C (197 aa).

Belongs to the complex I 30 kDa subunit family. As to quaternary structure, NDH-1 is composed of 14 different subunits. Subunits NuoB, C, D, E, F, and G constitute the peripheral sector of the complex.

Its subcellular location is the cell inner membrane. The enzyme catalyses a quinone + NADH + 5 H(+)(in) = a quinol + NAD(+) + 4 H(+)(out). In terms of biological role, NDH-1 shuttles electrons from NADH, via FMN and iron-sulfur (Fe-S) centers, to quinones in the respiratory chain. The immediate electron acceptor for the enzyme in this species is believed to be ubiquinone. Couples the redox reaction to proton translocation (for every two electrons transferred, four hydrogen ions are translocated across the cytoplasmic membrane), and thus conserves the redox energy in a proton gradient. This chain is NADH-quinone oxidoreductase subunit C, found in Neisseria gonorrhoeae (strain ATCC 700825 / FA 1090).